Consider the following 297-residue polypeptide: Ketohexokinase (297 aa).

Positions 15, 41, 42, and 45 each coordinate beta-D-fructose. Residues arginine 107, 225-228 (AEEG), and 254-257 (GAGD) contribute to the ATP site. Aspartate 257 is a beta-D-fructose binding site.

Belongs to the carbohydrate kinase PfkB family. Homodimer.

The enzyme catalyses beta-D-fructose + ATP = beta-D-fructose 1-phosphate + ADP + H(+). It functions in the pathway carbohydrate metabolism; fructose metabolism. Requires potassium. Inhibition by ADP. Functionally, catalyzes the phosphorylation of the ketose sugar fructose to fructose-1-phosphate. This is Ketohexokinase (KHK) from Pongo abelii (Sumatran orangutan).